A 1512-amino-acid polypeptide reads, in one-letter code: Mitogen-activated protein kinase kinase kinase 1 (1512 aa).

The segment covering methionine 1–glycine 13 has biased composition (low complexity). Disordered stretches follow at residues methionine 1–proline 37, serine 67–glutamate 181, and valine 213–threonine 304. Alanine 2 carries the post-translational modification N-acetylalanine. A phosphoserine mark is found at serine 21 and serine 35. Composition is skewed to low complexity over residues alanine 81–alanine 99, alanine 129–glutamate 142, and alanine 150–alanine 160. Serine 137 and serine 154 each carry phosphoserine. The segment covering arginine 162–glutamate 181 has biased composition (basic and acidic residues). Low complexity predominate over residues serine 250 to arginine 260. The residue at position 275 (serine 275) is a Phosphoserine. Phosphothreonine is present on threonine 285. A phosphoserine mark is found at serine 292, serine 297, and serine 300. The SWIM-type zinc-finger motif lies at tyrosine 338 to phenylalanine 366. Low complexity predominate over residues serine 416–asparagine 433. Residues serine 416–lysine 436 are disordered. The segment at cysteine 443–arginine 492 adopts an RING-type zinc-finger fold. Phosphoserine occurs at positions 507 and 531. 2 disordered regions span residues serine 511–arginine 532 and serine 602–glutamine 624. Residues glycine 611–glutamine 624 are compositionally biased toward low complexity. Position 923 is a phosphoserine (serine 923). Residues serine 933 to leucine 972 form a disordered region. Over residues serine 939–threonine 949 the composition is skewed to low complexity. Phosphoserine is present on serine 1018. A compositionally biased stretch (basic and acidic residues) spans asparagine 1032–lysine 1041. Positions asparagine 1032–serine 1087 are disordered. Serine 1043 is modified (phosphoserine). Polar residues-rich tracts occupy residues valine 1045–isoleucine 1057 and threonine 1066–serine 1087. One can recognise a Protein kinase domain in the interval tryptophan 1243 to phenylalanine 1508. ATP contacts are provided by residues isoleucine 1249 to cysteine 1257 and lysine 1272. The active-site Proton acceptor is the aspartate 1369. 2 positions are modified to phosphothreonine; by autocatalysis: threonine 1400 and threonine 1412.

It belongs to the protein kinase superfamily. STE Ser/Thr protein kinase family. MAP kinase kinase kinase subfamily. In terms of assembly, binds both upstream activators and downstream substrates in multimolecular complexes through its N-terminus. Oligomerizes after binding MAP2K4 or TRAF2. Interacts with AXIN1. Interacts (via the kinase catalytic domain) with STK38. Interacts with GRIPAP1. It depends on Mg(2+) as a cofactor. Autophosphorylated.

The enzyme catalyses L-seryl-[protein] + ATP = O-phospho-L-seryl-[protein] + ADP + H(+). The catalysed reaction is L-threonyl-[protein] + ATP = O-phospho-L-threonyl-[protein] + ADP + H(+). It carries out the reaction S-ubiquitinyl-[E2 ubiquitin-conjugating enzyme]-L-cysteine + [acceptor protein]-L-lysine = [E2 ubiquitin-conjugating enzyme]-L-cysteine + N(6)-ubiquitinyl-[acceptor protein]-L-lysine.. Its activity is regulated as follows. Activated by autophosphorylation on Thr-1400 and Thr-1412 following oligomerization. In terms of biological role, component of a protein kinase signal transduction cascade. Activates the ERK and JNK kinase pathways by phosphorylation of MAP2K1 and MAP2K4. May phosphorylate the MAPK8/JNK1 kinase. Activates CHUK and IKBKB, the central protein kinases of the NF-kappa-B pathway. The polypeptide is Mitogen-activated protein kinase kinase kinase 1 (MAP3K1) (Homo sapiens (Human)).